The following is a 208-amino-acid chain: 3-demethoxyubiquinol 3-hydroxylase (208 aa).

The Fe cation site is built by E57, E87, H90, E139, E171, and H174.

It belongs to the COQ7 family. The cofactor is Fe cation.

The protein resides in the cell membrane. It carries out the reaction a 5-methoxy-2-methyl-3-(all-trans-polyprenyl)benzene-1,4-diol + AH2 + O2 = a 3-demethylubiquinol + A + H2O. It functions in the pathway cofactor biosynthesis; ubiquinone biosynthesis. Its function is as follows. Catalyzes the hydroxylation of 2-nonaprenyl-3-methyl-6-methoxy-1,4-benzoquinol during ubiquinone biosynthesis. This is 3-demethoxyubiquinol 3-hydroxylase from Burkholderia pseudomallei (strain 1106a).